We begin with the raw amino-acid sequence, 256 residues long: Short-chain dehydrogenase/reductase cdmF (256 aa).

Positions 11, 57, and 119 each coordinate NADP(+). Catalysis depends on Ser-137, which acts as the Proton donor. Positions 151, 155, 183, and 187 each coordinate NADP(+). The Proton acceptor role is filled by Tyr-151. Lys-155 (lowers pKa of active site Tyr) is an active-site residue.

This sequence belongs to the short-chain dehydrogenases/reductases (SDR) family.

The enzyme catalyses 3-hydroxypentacecilide A + A = chrodrimanin C + AH2. The catalysed reaction is chrodrimanin F + A = chrodrimanin H + AH2. The protein operates within secondary metabolite biosynthesis; terpenoid biosynthesis. Its function is as follows. Short-chain dehydrogenase/reductase; part of the gene cluster that mediates the biosynthesis of chrodrimanin B, a meroterpenoid that acts as a potent blocker of insect GABA-gated chloride channels. The first step of the pathway is the biosynthesis of 6-hydroxymellein by the polyketide synthase cdmE. The prenyltransferase cdmH acts as a 6-hydroxymellein 5-farnesyltransferase and produces the hydrophobic metabolite verruculide C. The FAD-dependent monooxygenase cdmI further converts verruculide C into verruculide B. The terpene cyclase cdmG then produced the pentacyclic molecule 3-hydroxypentacecilide A, the backbone structure of chrodrimanin B, via folding the farnesyl moiety of the substrate into the chair-boat conformation. The short-chain dehydrogenase/reductase cdmF functions as the 3-OH dehydrogenase that oxidizes the C-3 hydroxyl group of 3-hydroxypentacecilide A and produces chrodrimanin C, the dehydrogenated product of 3-hydroxypentacecilide A. The cytochrome P450 monooxygenase cdmJ then accepts both 3-hydroxypentacecilide A and chrodrimanin C and functions as a C-7-beta-hydroxylase to produce respectively chrodrimanin H and chrodrimanin F. The dioxygenase cdmA accepts chrodrimanin H to afford chrodrimanin E, which is further transformed to chrodrimanin A by the dioxygenase cdmD. CdmA can also accept chrodrimanin C as substrate to convert it into verruculide A, which is further converted into chrodrimanin T by cdmD. The last step of the biosynthesis is proposed to be performed by the acetyltransferase cdmC which acetylates chrodrimanin A to yield chrodrimanin B. The pathway may also lead to the production of additional shunt products, including chrodrimanins T and U. In Talaromyces verruculosus (Penicillium verruculosum), this protein is Short-chain dehydrogenase/reductase cdmF.